Consider the following 343-residue polypeptide: Allantoicase (343 aa).

Belongs to the allantoicase family.

It catalyses the reaction allantoate + H2O = (S)-ureidoglycolate + urea. Its pathway is nitrogen metabolism; (S)-allantoin degradation; (S)-ureidoglycolate from allantoate (aminidohydrolase route): step 1/1. Its function is as follows. Utilization of purines as secondary nitrogen sources, when primary sources are limiting. In Saccharomyces cerevisiae (strain ATCC 204508 / S288c) (Baker's yeast), this protein is Allantoicase (DAL2).